The primary structure comprises 703 residues: Serotransferrin (703 aa).

Residues 1–19 form the signal peptide; it reads MDLSLHVALCLGMLALCLA. Transferrin-like domains follow at residues 27 to 341 and 354 to 686; these read VRWC…ALKE and VRWC…SLNK. 2 cysteine pairs are disulfide-bonded: cysteine 30/cysteine 65 and cysteine 40/cysteine 56. Residues aspartate 80 and tyrosine 112 each coordinate Fe(3+). 3 disulfides stabilise this stretch: cysteine 135–cysteine 218, cysteine 180–cysteine 193, and cysteine 246–cysteine 260. The hydrogencarbonate site is built by threonine 137, lysine 141, alanine 143, and glycine 144. Tyrosine 212 is a binding site for Fe(3+). Residue histidine 268 participates in Fe(3+) binding. The tract at residues 341 to 350 is connecting region; it reads EGVKEDDLAA. Cystine bridges form between cysteine 357/cysteine 389 and cysteine 367/cysteine 380. Aspartate 404 and tyrosine 443 together coordinate Fe(3+). 7 disulfide bridges follow: cysteine 414–cysteine 698, cysteine 432–cysteine 659, cysteine 466–cysteine 545, cysteine 490–cysteine 687, cysteine 500–cysteine 514, cysteine 511–cysteine 528, and cysteine 585–cysteine 599. Positions 468, 472, 474, and 475 each coordinate hydrogencarbonate. A Fe(3+)-binding site is contributed by tyrosine 539. Residue histidine 607 participates in Fe(3+) binding.

Belongs to the transferrin family. Monomer. As to expression, plasma.

Its subcellular location is the secreted. Its function is as follows. Transferrins are iron binding transport proteins which can bind two Fe(3+) ions in association with the binding of an anion, usually bicarbonate. It is responsible for the transport of iron from sites of absorption and heme degradation to those of storage and utilization. Serum transferrin may also have a further role in stimulating cell proliferation. The polypeptide is Serotransferrin (tf) (Xenopus tropicalis (Western clawed frog)).